The following is a 78-amino-acid chain: Probable Fe(2+)-trafficking protein (78 aa).

This sequence belongs to the Fe(2+)-trafficking protein family. As to quaternary structure, monomer.

Functionally, could be a mediator in iron transactions between iron acquisition and iron-requiring processes, such as synthesis and/or repair of Fe-S clusters in biosynthetic enzymes. The sequence is that of Probable Fe(2+)-trafficking protein from Wigglesworthia glossinidia brevipalpis.